The sequence spans 340 residues: UDP-3-O-(3-hydroxymyristoyl)glucosamine N-acyltransferase (340 aa).

Histidine 239 (proton acceptor) is an active-site residue.

It belongs to the transferase hexapeptide repeat family. LpxD subfamily. In terms of assembly, homotrimer.

The enzyme catalyses a UDP-3-O-[(3R)-3-hydroxyacyl]-alpha-D-glucosamine + a (3R)-hydroxyacyl-[ACP] = a UDP-2-N,3-O-bis[(3R)-3-hydroxyacyl]-alpha-D-glucosamine + holo-[ACP] + H(+). It carries out the reaction UDP-3-O-[(3R)-3-hydroxytetradecanoyl]-alpha-D-glucosamine + (3R)-hydroxytetradecanoyl-[ACP] = UDP-2-N,3-O-bis[(3R)-3-hydroxytetradecanoyl]-alpha-D-glucosamine + holo-[ACP] + H(+). The protein operates within glycolipid biosynthesis; lipid IV(A) biosynthesis; lipid IV(A) from (3R)-3-hydroxytetradecanoyl-[acyl-carrier-protein] and UDP-N-acetyl-alpha-D-glucosamine: step 3/6. Functionally, catalyzes the N-acylation of UDP-3-O-(hydroxytetradecanoyl)glucosamine using 3-hydroxytetradecanoyl-ACP as the acyl donor. Is involved in the biosynthesis of lipid A, a phosphorylated glycolipid that anchors the lipopolysaccharide to the outer membrane of the cell. This is UDP-3-O-(3-hydroxymyristoyl)glucosamine N-acyltransferase from Pectobacterium atrosepticum (strain SCRI 1043 / ATCC BAA-672) (Erwinia carotovora subsp. atroseptica).